A 602-amino-acid chain; its full sequence is DNA mismatch repair protein MutL (602 aa).

The tract at residues lysine 337–glycine 367 is disordered. Residues glycine 342–glutamine 352 are compositionally biased toward polar residues. A compositionally biased stretch (basic and acidic residues) spans aspartate 353–glycine 367.

This sequence belongs to the DNA mismatch repair MutL/HexB family.

Its function is as follows. This protein is involved in the repair of mismatches in DNA. It is required for dam-dependent methyl-directed DNA mismatch repair. May act as a 'molecular matchmaker', a protein that promotes the formation of a stable complex between two or more DNA-binding proteins in an ATP-dependent manner without itself being part of a final effector complex. This Kosmotoga olearia (strain ATCC BAA-1733 / DSM 21960 / TBF 19.5.1) protein is DNA mismatch repair protein MutL.